A 220-amino-acid polypeptide reads, in one-letter code: Deoxyribose-phosphate aldolase (220 aa).

Residue Asp-89 is the Proton donor/acceptor of the active site. Lys-151 functions as the Schiff-base intermediate with acetaldehyde in the catalytic mechanism. Residue Lys-180 is the Proton donor/acceptor of the active site.

It belongs to the DeoC/FbaB aldolase family. DeoC type 1 subfamily.

It is found in the cytoplasm. The catalysed reaction is 2-deoxy-D-ribose 5-phosphate = D-glyceraldehyde 3-phosphate + acetaldehyde. Its pathway is carbohydrate degradation; 2-deoxy-D-ribose 1-phosphate degradation; D-glyceraldehyde 3-phosphate and acetaldehyde from 2-deoxy-alpha-D-ribose 1-phosphate: step 2/2. Catalyzes a reversible aldol reaction between acetaldehyde and D-glyceraldehyde 3-phosphate to generate 2-deoxy-D-ribose 5-phosphate. This Macrococcus caseolyticus (strain JCSC5402) (Macrococcoides caseolyticum) protein is Deoxyribose-phosphate aldolase.